The following is a 247-amino-acid chain: Cementoblastoma-derived protein 1 (247 aa).

The segment covering 1–28 (MGTSSTDSQQAGHRRCSTSNTSAENLTC) has biased composition (polar residues). Disordered stretches follow at residues 1-52 (MGTS…AGQP) and 147-183 (EENS…EKVK).

In terms of processing, phosphorylated. N-glycosylated. Expressed by cementoblasts, a subpopulation of periodontal ligament cells and cells located around vessels in periodontium (at protein level).

The protein resides in the cytoplasm. It localises to the nucleus. Its function is as follows. May play a role in development of the periodontium which surrounds and supports the teeth by promoting the differentiation of multi-potent cells from the periodontal ligament into cementoblasts to form the cementum. Binds hydroxyapatite and may promote the biomineralization of the cementum. Also promotes cell proliferation. The chain is Cementoblastoma-derived protein 1 from Homo sapiens (Human).